The sequence spans 207 residues: Probable GTP-binding protein EngB (207 aa).

In terms of domain architecture, EngB-type G spans 25-202 (DVPEIAFVGR…ATLLWQWAHP (178 aa)). GTP is bound by residues 33–40 (GRSNAGKS), 60–64 (GRTQH), 82–85 (DLPG), 152–155 (TKAD), and 181–183 (FSA). Mg(2+) is bound by residues serine 40 and threonine 62.

It belongs to the TRAFAC class TrmE-Era-EngA-EngB-Septin-like GTPase superfamily. EngB GTPase family. The cofactor is Mg(2+).

Functionally, necessary for normal cell division and for the maintenance of normal septation. This chain is Probable GTP-binding protein EngB, found in Albidiferax ferrireducens (strain ATCC BAA-621 / DSM 15236 / T118) (Rhodoferax ferrireducens).